A 269-amino-acid polypeptide reads, in one-letter code: RBPJ-interacting and tubulin-associated protein 1 (269 aa).

The short motif at 5 to 17 (VELAISGMQTLHV) is the Nuclear export signal element. Disordered regions lie at residues 67-94 (GTGVSQALGANGSCESTSSSGSTPTLTP) and 145-269 (PATP…PPWK). The span at 79–93 (SCESTSSSGSTPTLT) shows a compositional bias: low complexity. Positions 92–108 (LTPRKKNKYRLISHTPS) match the Nuclear localization signal motif. The segment at 128 to 156 (WMARGDAAKLHALFWTPPATPRGSHSPRP) is interaction with RBPJ/RBPSUH. Positions 156–269 (PRETPVRCVH…ATQKTKPPWK (114 aa)) are interaction with tubulin. 2 stretches are compositionally biased toward polar residues: residues 202 to 220 (LTHPNVPSTGHTPASSPCT) and 247 to 269 (VSVSVPTTPRQGGATQKTKPPWK).

Belongs to the RITA family. Interacts with RBPJ/RBPSUH.

The protein localises to the cytoplasm. Its subcellular location is the nucleus. The protein resides in the cytoskeleton. It is found in the microtubule organizing center. It localises to the centrosome. Functionally, tubulin-binding protein that acts as a negative regulator of Notch signaling pathway. Shuttles between the cytoplasm and the nucleus and mediates the nuclear export of RBPJ/RBPSUH, thereby preventing the interaction between RBPJ/RBPSUH and NICD product of Notch proteins (Notch intracellular domain), leading to down-regulate Notch-mediated transcription. May play a role in neurogenesis. This Bos taurus (Bovine) protein is RBPJ-interacting and tubulin-associated protein 1 (RITA1).